Consider the following 406-residue polypeptide: Argininosuccinate synthase (406 aa).

ATP-binding positions include 11 to 19 and Ala-38; that span reads AYSGGLDTS. The L-citrulline site is built by Tyr-91 and Ser-96. Gly-121 lines the ATP pocket. L-aspartate-binding residues include Thr-123, Asn-127, and Asp-128. Residue Asn-127 participates in L-citrulline binding. 5 residues coordinate L-citrulline: Arg-131, Ser-182, Ser-191, Glu-267, and Tyr-279.

This sequence belongs to the argininosuccinate synthase family. Type 1 subfamily. Homotetramer.

The protein localises to the cytoplasm. It catalyses the reaction L-citrulline + L-aspartate + ATP = 2-(N(omega)-L-arginino)succinate + AMP + diphosphate + H(+). It functions in the pathway amino-acid biosynthesis; L-arginine biosynthesis; L-arginine from L-ornithine and carbamoyl phosphate: step 2/3. This chain is Argininosuccinate synthase, found in Rhodospirillum centenum (strain ATCC 51521 / SW).